A 505-amino-acid polypeptide reads, in one-letter code: L-arabinose isomerase (505 aa).

Residues glutamate 308, glutamate 335, histidine 352, and histidine 453 each coordinate Mn(2+).

The protein belongs to the arabinose isomerase family. Mn(2+) serves as cofactor.

It catalyses the reaction beta-L-arabinopyranose = L-ribulose. Its pathway is carbohydrate degradation; L-arabinose degradation via L-ribulose; D-xylulose 5-phosphate from L-arabinose (bacterial route): step 1/3. Functionally, catalyzes the conversion of L-arabinose to L-ribulose. The protein is L-arabinose isomerase of Bifidobacterium longum (strain DJO10A).